The following is a 320-amino-acid chain: MKIIFAGTPEFAATALAALLKTSHEIIAVYTQPDRKAGRGQKLTPSPVKQLALEHNIPVYQPLHFKASTEEGLAAQQELAALGADVMVVAAYGLILPQAVLDTPKYGCLNIHGSLLPRWRGAAPIQRAIATGDDETGITIMQMAAGLDTGDMMYKTYCPIASEDTSATLHDKLAAQGATAICAVLESEETLQKYLAEREVQDESLTVYAHKLVKSEARIDWSMNAVQVDRNIRAFNPWPVAFIQLDENNALRVWNSIISSQSKVNAQAGEIIAIDKQGVHVACGENTFICLTSVQWPGGKALNAQQIAQTQKLHVGQILP.

A (6S)-5,6,7,8-tetrahydrofolate-binding site is contributed by 114-117 (SLLP).

It belongs to the Fmt family.

It carries out the reaction L-methionyl-tRNA(fMet) + (6R)-10-formyltetrahydrofolate = N-formyl-L-methionyl-tRNA(fMet) + (6S)-5,6,7,8-tetrahydrofolate + H(+). Functionally, attaches a formyl group to the free amino group of methionyl-tRNA(fMet). The formyl group appears to play a dual role in the initiator identity of N-formylmethionyl-tRNA by promoting its recognition by IF2 and preventing the misappropriation of this tRNA by the elongation apparatus. The protein is Methionyl-tRNA formyltransferase of Acinetobacter baumannii (strain AB0057).